We begin with the raw amino-acid sequence, 434 residues long: Putative neutral sphingomyelinase (434 aa).

Glu-83 is a binding site for Mg(2+). His-318 acts as the Proton acceptor in catalysis. The next 2 membrane-spanning stretches (helical) occupy residues 366–388 (IFFF…FEVF) and 392–414 (FAVL…LIGL).

Belongs to the neutral sphingomyelinase family.

The protein localises to the membrane. The enzyme catalyses an N-(acyl)-sphingosylphosphocholine + H2O = an N-acyl-sphingoid base + phosphocholine + H(+). The catalysed reaction is a sphingomyelin + H2O = phosphocholine + an N-acylsphing-4-enine + H(+). It carries out the reaction an N-acyl-15-methylhexadecasphing-4-enine-1-phosphocholine + H2O = an N-acyl-15-methylhexadecasphing-4-enine + phosphocholine + H(+). Its pathway is lipid metabolism; sphingolipid metabolism. In terms of biological role, catalyzes the hydrolysis of sphingomyelin producing a ceramide (N-acyl-sphingoid base) and a phosphocholine. C.elegans contain specific sphingoid bases, which are unique or different in structure compared to the sphingoid bases found in other animals. Two examples of these distinctive compounds are: 15-methylhexadecasphinganine and 15-methylhexadecasphing-4-enine. In Caenorhabditis elegans, this protein is Putative neutral sphingomyelinase.